The following is a 394-amino-acid chain: 1-deoxy-D-xylulose 5-phosphate reductoisomerase (394 aa).

5 residues coordinate NADPH: Thr-13, Gly-14, Thr-15, Ile-16, and Asn-125. Lys-126 lines the 1-deoxy-D-xylulose 5-phosphate pocket. Glu-127 is a binding site for NADPH. Asp-151 contacts Mn(2+). 4 residues coordinate 1-deoxy-D-xylulose 5-phosphate: Ser-152, Glu-153, Ser-182, and His-205. Mn(2+) is bound at residue Glu-153. Position 211 (Gly-211) interacts with NADPH. Positions 218, 223, 224, and 227 each coordinate 1-deoxy-D-xylulose 5-phosphate. Glu-227 serves as a coordination point for Mn(2+).

It belongs to the DXR family. It depends on Mg(2+) as a cofactor. Mn(2+) serves as cofactor.

The enzyme catalyses 2-C-methyl-D-erythritol 4-phosphate + NADP(+) = 1-deoxy-D-xylulose 5-phosphate + NADPH + H(+). It participates in isoprenoid biosynthesis; isopentenyl diphosphate biosynthesis via DXP pathway; isopentenyl diphosphate from 1-deoxy-D-xylulose 5-phosphate: step 1/6. Its function is as follows. Catalyzes the NADPH-dependent rearrangement and reduction of 1-deoxy-D-xylulose-5-phosphate (DXP) to 2-C-methyl-D-erythritol 4-phosphate (MEP). This chain is 1-deoxy-D-xylulose 5-phosphate reductoisomerase, found in Methylobacillus flagellatus (strain ATCC 51484 / DSM 6875 / VKM B-1610 / KT).